A 246-amino-acid chain; its full sequence is Cell division protein ZapD (246 aa).

This sequence belongs to the ZapD family. In terms of assembly, interacts with FtsZ.

Its subcellular location is the cytoplasm. Cell division factor that enhances FtsZ-ring assembly. Directly interacts with FtsZ and promotes bundling of FtsZ protofilaments, with a reduction in FtsZ GTPase activity. In Vibrio vulnificus (strain CMCP6), this protein is Cell division protein ZapD.